We begin with the raw amino-acid sequence, 588 residues long: Polyphenol oxidase II, chloroplastic (588 aa).

A compositionally biased stretch (polar residues) spans 1–10; it reads MASFTTSPCT. The segment at 1 to 32 is disordered; it reads MASFTTSPCTSAAPKTPKSLSSSATISSPLPK. Residues 1 to 50 constitute a chloroplast transit peptide; the sequence is MASFTTSPCTSAAPKTPKSLSSSATISSPLPKPSQIHIATAKRTHHFKVS. The segment covering 16 to 29 has biased composition (low complexity); it reads TPKSLSSSATISSP. The N-terminal 38 residues, 51-88, are a transit peptide targeting the thylakoid; the sequence is CNAPNGDSQPKLDRRDVLLGLGGLAGAASLINNPLAFA. Disulfide bonds link C99–C116 and C115–C179. Cu cation contacts are provided by H178, H199, H208, H330, H334, and H366. Positions 182–199 form a cross-link, 2'-(S-cysteinyl)-histidine (Cys-His); that stretch reads CNGGYVQTDYPDKEIQVH.

It belongs to the tyrosinase family. In terms of assembly, monomer. Cu(2+) is required as a cofactor.

It localises to the plastid. Its subcellular location is the chloroplast thylakoid lumen. The enzyme catalyses 2 catechol + O2 = 2 1,2-benzoquinone + 2 H2O. In terms of biological role, catalyzes the oxidation of mono- and o-diphenols to o-diquinones. The polypeptide is Polyphenol oxidase II, chloroplastic (co-2) (Ipomoea batatas (Sweet potato)).